Here is a 402-residue protein sequence, read N- to C-terminus: Beta sliding clamp (402 aa).

This sequence belongs to the beta sliding clamp family. In terms of assembly, forms a ring-shaped head-to-tail homodimer around DNA which binds and tethers DNA polymerases and other proteins to the DNA. The DNA replisome complex has a single clamp-loading complex (3 tau and 1 each of delta, delta', psi and chi subunits) which binds 3 Pol III cores (1 core on the leading strand and 2 on the lagging strand) each with a beta sliding clamp dimer. Additional proteins in the replisome are other copies of gamma, psi and chi, Ssb, DNA helicase and RNA primase.

Its subcellular location is the cytoplasm. Its function is as follows. Confers DNA tethering and processivity to DNA polymerases and other proteins. Acts as a clamp, forming a ring around DNA (a reaction catalyzed by the clamp-loading complex) which diffuses in an ATP-independent manner freely and bidirectionally along dsDNA. Initially characterized for its ability to contact the catalytic subunit of DNA polymerase III (Pol III), a complex, multichain enzyme responsible for most of the replicative synthesis in bacteria; Pol III exhibits 3'-5' exonuclease proofreading activity. The beta chain is required for initiation of replication as well as for processivity of DNA replication. This is Beta sliding clamp (dnaN) from Mycobacterium bovis (strain ATCC BAA-935 / AF2122/97).